A 516-amino-acid chain; its full sequence is (R)-citramalate synthase CimA (516 aa).

One can recognise a Pyruvate carboxyltransferase domain in the interval 8–269 (LEILDVTLRD…KTNINEIAIT (262 aa)). The Proton donor role is filled by Arg-16. Pyruvate-binding positions include 16-17 (RD) and Tyr-144. Position 17 (Asp-17) interacts with Mn(2+). Glu-146 serves as the catalytic Proton acceptor. Thr-179 provides a ligand contact to pyruvate. Positions 207 and 209 each coordinate Mn(2+).

Belongs to the alpha-IPM synthase/homocitrate synthase family. As to quaternary structure, homodimer. Requires Mn(2+) as cofactor.

It catalyses the reaction pyruvate + acetyl-CoA + H2O = (3R)-citramalate + CoA + H(+). It functions in the pathway amino-acid biosynthesis; L-isoleucine biosynthesis; 2-oxobutanoate from pyruvate: step 1/3. With respect to regulation, regulated by the end-product isoleucine via a feedback inhibition. The binding of isoleucine has inhibitory effects on the binding of both pyruvate and acetyl-CoA. May act via conformational change of the dimer interface of the regulatory domain, leading to inhibition of the catalytic reaction. Catalyzes the condensation of pyruvate and acetyl-coenzyme A to form (R)-citramalate. Shows strict substrate specificity for pyruvate. Cannot use alpha-ketoisovalerate, alpha-ketobutyrate, alpha-ketoisocaproate, alpha-ketoglutarate or glyoxylate. In Leptospira interrogans serogroup Icterohaemorrhagiae serovar Lai (strain 56601), this protein is (R)-citramalate synthase CimA.